A 557-amino-acid polypeptide reads, in one-letter code: Selenoprotein N (557 aa).

The span at Met-1 to Gly-21 shows a compositional bias: basic and acidic residues. Residues Met-1–Gly-28 form a disordered region. The helical transmembrane segment at Ile-35 to Leu-55 threads the bilayer. A non-standard amino acid (selenocysteine) is located at residue Sec-430. N-linked (GlcNAc...) asparagine glycans are attached at residues Asn-451 and Asn-499.

As to quaternary structure, interacts with ryr3.

It is found in the endoplasmic reticulum membrane. Plays an important role in cell protection against oxidative stress and in the regulation of redox-related calcium homeostasis. Regulates the calcium level of the ER by protecting the calcium pump ATP2A2 against the oxidoreductase ERO1A-mediated oxidative damage. Acts as a modulator of ryanodine receptor (RyR) activity: protects RyR from oxidation due to increased oxidative stress, or directly controls the RyR redox state, regulating the RyR-mediated calcium mobilization required for normal muscle development and differentiation. Plays an important role in muscle development and differentiation during early development. Required for development of the slow muscle fiber lineage. Required for the correct organization and attachment of the myofibrils, as well as for the continuity and integrity of the connective tissue that forms the myoseptum. This chain is Selenoprotein N, found in Danio rerio (Zebrafish).